The chain runs to 163 residues: Nucleotide-binding protein RHA1_ro01989 (163 aa).

The protein belongs to the YajQ family.

Nucleotide-binding protein. The sequence is that of Nucleotide-binding protein RHA1_ro01989 from Rhodococcus jostii (strain RHA1).